The sequence spans 159 residues: L-alanine exporter AlaE (159 aa).

4 consecutive transmembrane segments (helical) span residues 17 to 37, 48 to 68, 86 to 106, and 110 to 130; these read FAMV…VSGM, LSIP…DYLL, MVAY…AVGA, and QIIT…IVYG.

This sequence belongs to the AlaE exporter family.

It localises to the cell inner membrane. In terms of biological role, exports L-alanine. The protein is L-alanine exporter AlaE of Photobacterium profundum (strain SS9).